We begin with the raw amino-acid sequence, 235 residues long: Leucyl/phenylalanyl-tRNA--protein transferase (235 aa).

Belongs to the L/F-transferase family.

It is found in the cytoplasm. It catalyses the reaction N-terminal L-lysyl-[protein] + L-leucyl-tRNA(Leu) = N-terminal L-leucyl-L-lysyl-[protein] + tRNA(Leu) + H(+). The catalysed reaction is N-terminal L-arginyl-[protein] + L-leucyl-tRNA(Leu) = N-terminal L-leucyl-L-arginyl-[protein] + tRNA(Leu) + H(+). The enzyme catalyses L-phenylalanyl-tRNA(Phe) + an N-terminal L-alpha-aminoacyl-[protein] = an N-terminal L-phenylalanyl-L-alpha-aminoacyl-[protein] + tRNA(Phe). Its function is as follows. Functions in the N-end rule pathway of protein degradation where it conjugates Leu, Phe and, less efficiently, Met from aminoacyl-tRNAs to the N-termini of proteins containing an N-terminal arginine or lysine. In Shewanella frigidimarina (strain NCIMB 400), this protein is Leucyl/phenylalanyl-tRNA--protein transferase.